The following is a 207-amino-acid chain: Ribosomal RNA large subunit methyltransferase E (207 aa).

Residues G49, W51, D69, D87, and D111 each contribute to the S-adenosyl-L-methionine site. The Proton acceptor role is filled by K151.

Belongs to the class I-like SAM-binding methyltransferase superfamily. RNA methyltransferase RlmE family.

Its subcellular location is the cytoplasm. The enzyme catalyses uridine(2552) in 23S rRNA + S-adenosyl-L-methionine = 2'-O-methyluridine(2552) in 23S rRNA + S-adenosyl-L-homocysteine + H(+). Its function is as follows. Specifically methylates the uridine in position 2552 of 23S rRNA at the 2'-O position of the ribose in the fully assembled 50S ribosomal subunit. In Oleidesulfovibrio alaskensis (strain ATCC BAA-1058 / DSM 17464 / G20) (Desulfovibrio alaskensis), this protein is Ribosomal RNA large subunit methyltransferase E.